Consider the following 171-residue polypeptide: GTP-dependent dephospho-CoA kinase (171 aa).

4 residues coordinate GTP: aspartate 49, valine 51, aspartate 68, and glutamate 122.

This sequence belongs to the GTP-dependent DPCK family.

It carries out the reaction 3'-dephospho-CoA + GTP = GDP + CoA + H(+). It functions in the pathway cofactor biosynthesis; coenzyme A biosynthesis. Catalyzes the GTP-dependent phosphorylation of the 3'-hydroxyl group of dephosphocoenzyme A to form coenzyme A (CoA). In Hyperthermus butylicus (strain DSM 5456 / JCM 9403 / PLM1-5), this protein is GTP-dependent dephospho-CoA kinase.